The sequence spans 216 residues: Adenylate kinase (216 aa).

10 to 15 (GAGKGT) contributes to the ATP binding site. The segment at 30-59 (STGDIFRKNISEKTPLGVKAKEYMDKGQLV) is NMP. AMP is bound by residues threonine 31, arginine 36, 57–59 (QLV), 85–88 (GFPR), and glutamine 92. The tract at residues 126–163 (GRRVCPSCGASYHIKFNPPKIEGLCDVCKKEVIQRKDD) is LID. An ATP-binding site is contributed by arginine 127. Zn(2+) contacts are provided by cysteine 130 and cysteine 133. 136-137 (SY) lines the ATP pocket. Residues cysteine 150 and cysteine 153 each contribute to the Zn(2+) site. AMP is bound by residues arginine 160 and arginine 171. Glutamine 199 serves as a coordination point for ATP.

This sequence belongs to the adenylate kinase family. In terms of assembly, monomer.

The protein resides in the cytoplasm. It carries out the reaction AMP + ATP = 2 ADP. It functions in the pathway purine metabolism; AMP biosynthesis via salvage pathway; AMP from ADP: step 1/1. In terms of biological role, catalyzes the reversible transfer of the terminal phosphate group between ATP and AMP. Plays an important role in cellular energy homeostasis and in adenine nucleotide metabolism. This is Adenylate kinase from Clostridium novyi (strain NT).